A 116-amino-acid polypeptide reads, in one-letter code: ACSTPHYDLPLICAATWTATCVPRQTSAARCGPCPRHDPHPSAPLPLPAPHAVDPASRERLLCFSPACFSHSLYLFLNNKNTETLIITAVCFIRVSRCRKKREGSPKYSVSLTRAY.

This is an uncharacterized protein from Homo sapiens (Human).